We begin with the raw amino-acid sequence, 114 residues long: Iron-sulfur cluster insertion protein ErpA (114 aa).

Residues Cys-42, Cys-106, and Cys-108 each contribute to the iron-sulfur cluster site.

It belongs to the HesB/IscA family. In terms of assembly, homodimer. The cofactor is iron-sulfur cluster.

Its function is as follows. Required for insertion of 4Fe-4S clusters for at least IspG. This is Iron-sulfur cluster insertion protein ErpA from Hamiltonella defensa subsp. Acyrthosiphon pisum (strain 5AT).